Consider the following 84-residue polypeptide: Extender of the chronological lifespan protein 2 (84 aa).

The protein belongs to the ecl1 family.

It is found in the nucleus. Involved in chronological cell aging. The chain is Extender of the chronological lifespan protein 2 (ecl2) from Schizosaccharomyces pombe (strain 972 / ATCC 24843) (Fission yeast).